The sequence spans 412 residues: Argininosuccinate synthase (412 aa).

10-18 (AYSGGLDTS) is a binding site for ATP. Residue Y89 participates in L-citrulline binding. G119 contributes to the ATP binding site. L-aspartate-binding residues include T121, N125, and D126. N125 is a binding site for L-citrulline. Positions 129, 177, 261, and 273 each coordinate L-citrulline.

This sequence belongs to the argininosuccinate synthase family. Type 1 subfamily. As to quaternary structure, homotetramer.

It localises to the cytoplasm. It catalyses the reaction L-citrulline + L-aspartate + ATP = 2-(N(omega)-L-arginino)succinate + AMP + diphosphate + H(+). The protein operates within amino-acid biosynthesis; L-arginine biosynthesis; L-arginine from L-ornithine and carbamoyl phosphate: step 2/3. In Bifidobacterium longum subsp. infantis (strain ATCC 15697 / DSM 20088 / JCM 1222 / NCTC 11817 / S12), this protein is Argininosuccinate synthase.